The sequence spans 262 residues: Probable DNA polymerase sliding clamp 1 (262 aa).

The DNA-binding element occupies 67 to 86 (KCEHTYELGVNVLNMFKLLR).

It belongs to the PCNA family.

In terms of biological role, sliding clamp subunit. Responsible for tethering the catalytic subunit of DNA polymerase to DNA during high-speed replication. This is Probable DNA polymerase sliding clamp 1 from Chlorella (PBCV-1).